The sequence spans 1099 residues: Carbamoyl phosphate synthase large chain (1099 aa).

A carboxyphosphate synthetic domain region spans residues 1–402; sequence MPRREDIKRI…ALGKALRSLE (402 aa). 12 residues coordinate ATP: R129, R169, G175, G176, E208, V210, E215, G241, I242, H243, Q285, and E299. The ATP-grasp 1 domain maps to 133-328; it reads KKTMEEAGLE…IAKIAALLAV (196 aa). The Mg(2+) site is built by Q285, E299, and N301. Q285, E299, and N301 together coordinate Mn(2+). The oligomerization domain stretch occupies residues 403–541; sequence LDAAPKLDLD…STYNGVENEA (139 aa). A carbamoyl phosphate synthetic domain region spans residues 542-944; sequence IPTDKEKIMI…AFAKAEIAAG (403 aa). The 192-residue stretch at 666–857 folds into the ATP-grasp 2 domain; the sequence is AKLLKRIGLR…VAKIAAKIMV (192 aa). ATP contacts are provided by R702, K741, L743, E748, G773, V774, H775, S776, Q816, and E828. Mg(2+) is bound by residues Q816, E828, and N830. Residues Q816, E828, and N830 each coordinate Mn(2+). Residues 945–1099 enclose the MGS-like domain; the sequence is NPLPTEGAIL…VRKLTDTWKM (155 aa). An allosteric domain region spans residues 945–1099; that stretch reads NPLPTEGAIL…VRKLTDTWKM (155 aa).

It belongs to the CarB family. Composed of two chains; the small (or glutamine) chain promotes the hydrolysis of glutamine to ammonia, which is used by the large (or ammonia) chain to synthesize carbamoyl phosphate. Tetramer of heterodimers (alpha,beta)4. The cofactor is Mg(2+). Requires Mn(2+) as cofactor.

The enzyme catalyses hydrogencarbonate + L-glutamine + 2 ATP + H2O = carbamoyl phosphate + L-glutamate + 2 ADP + phosphate + 2 H(+). The catalysed reaction is hydrogencarbonate + NH4(+) + 2 ATP = carbamoyl phosphate + 2 ADP + phosphate + 2 H(+). The protein operates within amino-acid biosynthesis; L-arginine biosynthesis; carbamoyl phosphate from bicarbonate: step 1/1. Its pathway is pyrimidine metabolism; UMP biosynthesis via de novo pathway; (S)-dihydroorotate from bicarbonate: step 1/3. In terms of biological role, large subunit of the glutamine-dependent carbamoyl phosphate synthetase (CPSase). CPSase catalyzes the formation of carbamoyl phosphate from the ammonia moiety of glutamine, carbonate, and phosphate donated by ATP, constituting the first step of 2 biosynthetic pathways, one leading to arginine and/or urea and the other to pyrimidine nucleotides. The large subunit (synthetase) binds the substrates ammonia (free or transferred from glutamine from the small subunit), hydrogencarbonate and ATP and carries out an ATP-coupled ligase reaction, activating hydrogencarbonate by forming carboxy phosphate which reacts with ammonia to form carbamoyl phosphate. The protein is Carbamoyl phosphate synthase large chain of Thermotoga neapolitana (strain ATCC 49049 / DSM 4359 / NBRC 107923 / NS-E).